The primary structure comprises 354 residues: Protein OPG055 (354 aa).

It belongs to the orthopoxvirus OPG055 family.

Its function is as follows. Stimulates increases in peripheral microtubule dynamics and may increase the motility of the infected cells, contributing to cell-to-cell spread of the virus. Seems to inhibit the signaling via the GTPase RHOA and DIAPH1/mDia. The polypeptide is Protein OPG055 (OPG055) (Homo sapiens (Human)).